A 393-amino-acid chain; its full sequence is Metal tolerance protein A2 (393 aa).

Residues 1 to 72 (MVTPKLHLDL…EAQERAASMR (72 aa)) are Cytoplasmic-facing. Residues 73-93 (KLLIAVLLCAIFIVVEVVGGI) form a helical membrane-spanning segment. Residues 94 to 105 (KANSLAILTDAA) are Vacuolar-facing. Residues 106–126 (HLLSDVAAFAISLFSLWASGW) form a helical membrane-spanning segment. The Cytoplasmic segment spans residues 127-138 (KANPQQSYGFFR). A helical membrane pass occupies residues 139–159 (IEILGALVSIQMIWLLAGILV). Residues 160-176 (YEAIVRLNNGSGEVEGS) are Vacuolar-facing. The helical transmembrane segment at 177–197 (LMFAVSAVGLLVNIAMAILLG) threads the bilayer. Residues 198-233 (HDHGHGHGHSHDNGHGHSHDHGHGIAATEHHHDSGH) are required for zinc-binding. The Cytoplasmic portion of the chain corresponds to 198–257 (HDHGHGHGHSHDNGHGHSHDHGHGIAATEHHHDSGHDESQLSDVLIEQKKQRNVNIQGAY). The span at 202–236 (HGHGHSHDNGHGHSHDHGHGIAATEHHHDSGHDES) shows a compositional bias: basic and acidic residues. Residues 202–237 (HGHGHSHDNGHGHSHDHGHGIAATEHHHDSGHDESQ) are disordered. The chain crosses the membrane as a helical span at residues 258–278 (LHVLGDSIQSVGVMIGGAIIW). The Vacuolar segment spans residues 279–284 (YKPEWK). Residues 285–305 (ILDLICTLVFSVIVLGTTIGM) traverse the membrane as a helical segment. Topologically, residues 306–393 (LRNILEVLME…SHVTIQIERQ (88 aa)) are cytoplasmic.

It belongs to the cation diffusion facilitator (CDF) transporter (TC 2.A.4) family. SLC30A subfamily.

The protein localises to the membrane. In terms of biological role, involved in sequestration of excess zinc in the cytoplasm into vacuoles to maintain zinc homeostasis. In Arabidopsis thaliana (Mouse-ear cress), this protein is Metal tolerance protein A2 (MTPA2).